The chain runs to 902 residues: HTH-type transcriptional regulator MalT (902 aa).

39–46 (SPAGYGKT) is an ATP binding site. The HTH luxR-type domain maps to 832 to 897 (ELVRTSPLTQ…EAIVTAENLL (66 aa)). Positions 856 to 875 (NEQIAQELDVAGTTIKTHIR) form a DNA-binding region, H-T-H motif.

This sequence belongs to the MalT family. Monomer in solution. Oligomerizes to an active state in the presence of the positive effectors ATP and maltotriose.

Its activity is regulated as follows. Activated by ATP and maltotriose, which are both required for DNA binding. Its function is as follows. Positively regulates the transcription of the maltose regulon whose gene products are responsible for uptake and catabolism of malto-oligosaccharides. Specifically binds to the promoter region of its target genes, recognizing a short DNA motif called the MalT box. In Vibrio campbellii (strain ATCC BAA-1116), this protein is HTH-type transcriptional regulator MalT.